A 357-amino-acid chain; its full sequence is MVKNGSHLDAETLAMLQNKAISITLPVVYTMVAIISIPGNFFSLWVLCWHIKPKTPSVIFMINLSITDLLLACCFPFQIFYHIQRNHWIFGKTLCSLVTVMFYSNMYSSILTMTCISIERYMGVVYPMKLIKWRRKRYALGACVIMWIFLLLAFYPLESTDLTYEVKELGIITCFDVLKWEMLPNFAAWVAFLLTLFVVLFLIPFIVTVGCYIGTIRKLIQTSSRYGNKQKTRSIYLAIIVLSVFITCFAPNNFILLAHMIVRLFYEGSLYPAYKLTLCLSCLNNCIDPFIYYFASKEFYQKFMQVFRPKVPLSDSLETRRESLFSGRTMSVRSMSSGPMDGLEGVKICLQRQESVF.

The Extracellular portion of the chain corresponds to 1–26 (MVKNGSHLDAETLAMLQNKAISITLP). N-linked (GlcNAc...) asparagine glycosylation occurs at asparagine 4. A helical transmembrane segment spans residues 27–47 (VVYTMVAIISIPGNFFSLWVL). The Cytoplasmic portion of the chain corresponds to 48–56 (CWHIKPKTP). The helical transmembrane segment at 57–77 (SVIFMINLSITDLLLACCFPF) threads the bilayer. Residues 78 to 97 (QIFYHIQRNHWIFGKTLCSL) are Extracellular-facing. Residues cysteine 95 and cysteine 174 are joined by a disulfide bond. The helical transmembrane segment at 98–118 (VTVMFYSNMYSSILTMTCISI) threads the bilayer. Topologically, residues 119-137 (ERYMGVVYPMKLIKWRRKR) are cytoplasmic. A helical membrane pass occupies residues 138-158 (YALGACVIMWIFLLLAFYPLE). Topologically, residues 159–185 (STDLTYEVKELGIITCFDVLKWEMLPN) are extracellular. Residues 186–206 (FAAWVAFLLTLFVVLFLIPFI) traverse the membrane as a helical segment. Topologically, residues 207 to 236 (VTVGCYIGTIRKLIQTSSRYGNKQKTRSIY) are cytoplasmic. A helical transmembrane segment spans residues 237–257 (LAIIVLSVFITCFAPNNFILL). The Extracellular portion of the chain corresponds to 258-271 (AHMIVRLFYEGSLY). A helical membrane pass occupies residues 272–294 (PAYKLTLCLSCLNNCIDPFIYYF). Residues 295–357 (ASKEFYQKFM…ICLQRQESVF (63 aa)) lie on the Cytoplasmic side of the membrane.

It belongs to the G-protein coupled receptor 1 family.

It is found in the cell membrane. Probable receptor for purines coupled to G-proteins. The protein is P2Y purinoceptor 8 (P2RY8) of Gallus gallus (Chicken).